The sequence spans 383 residues: Putative type I specificity subunit S.MgeORF438P (383 aa).

The segment at 1-142 is TRD1; it reads MTPKLKLNNN…KELEIPFTSN (142 aa). The interval 143 to 182 is conserved region 1; it reads KNEQHAIANTLSVFDERLENLASLIEINRKLRDEYAHKLF. Positions 143–182 form a coiled coil; sequence KNEQHAIANTLSVFDERLENLASLIEINRKLRDEYAHKLF. The segment at 183-330 is TRD2; the sequence is SLDEAFLSHW…GEIKVPYVKS (148 aa). A conserved region 2 region spans residues 331-370; sequence FQLQRKAGKIVFLLDQKLDQYKKELSSLTVIRDTLLKKLF. Residues 331–370 are a coiled coil; it reads FQLQRKAGKIVFLLDQKLDQYKKELSSLTVIRDTLLKKLF.

The protein belongs to the type-I restriction system S methylase family.

In terms of biological role, the specificity (S) subunit of a type I restriction enzyme; this subunit dictates DNA sequence specificity. This bacterium does not encode the associated endonuclease or methylase subunits. The protein is Putative type I specificity subunit S.MgeORF438P of Mycoplasma genitalium (strain ATCC 33530 / DSM 19775 / NCTC 10195 / G37) (Mycoplasmoides genitalium).